The sequence spans 93 residues: Small ribosomal subunit protein uS19 (93 aa).

Belongs to the universal ribosomal protein uS19 family.

In terms of biological role, protein S19 forms a complex with S13 that binds strongly to the 16S ribosomal RNA. The sequence is that of Small ribosomal subunit protein uS19 from Arthrobacter sp. (strain FB24).